Here is a 465-residue protein sequence, read N- to C-terminus: GDNF family receptor alpha-2 (465 aa).

The signal sequence occupies residues 1–21 (MILANAFCIVLFVDETLRSLA). 14 cysteine pairs are disulfide-bonded: C40–C93, C47–C53, C63–C78, C95–C105, C159–C220, C166–C172, C183–C198, C193–C239, C222–C227, C249–C321, C256–C262, C273–C291, C283–C345, and C323–C333. 3 N-linked (GlcNAc...) asparagine glycosylation sites follow: N355, N387, and N412. The GPI-anchor amidated serine moiety is linked to residue S445. A propeptide spans 446-465 (RHRAARILPAVPIVLLKLLL) (removed in mature form).

Belongs to the GDNFR family. As to quaternary structure, interacts with NRTN ligand and RET: forms a 2:2:2 ternary complex composed of NRTN ligand, GFRA2 and RET receptor.

The protein localises to the cell membrane. Functionally, receptor for neurturin (NRTN), a growth factor that supports the survival of sympathetic neurons. NRTN-binding leads to autophosphorylation and activation of the RET receptor. The polypeptide is GDNF family receptor alpha-2 (GFRA2) (Gallus gallus (Chicken)).